Here is a 407-residue protein sequence, read N- to C-terminus: 1-deoxy-D-xylulose 5-phosphate reductoisomerase (407 aa).

Residues Thr25, Gly26, Ser27, Ile28, Asn53, and Asn136 each contribute to the NADPH site. Position 137 (Lys137) interacts with 1-deoxy-D-xylulose 5-phosphate. NADPH is bound at residue Glu138. Asp162 contacts Mn(2+). Positions 163, 164, 188, and 211 each coordinate 1-deoxy-D-xylulose 5-phosphate. Mn(2+) is bound at residue Glu164. Residue Gly217 participates in NADPH binding. The 1-deoxy-D-xylulose 5-phosphate site is built by Ser224, Asn229, Lys230, and Glu233. Mn(2+) is bound at residue Glu233.

The protein belongs to the DXR family. It depends on Mg(2+) as a cofactor. Mn(2+) serves as cofactor.

The catalysed reaction is 2-C-methyl-D-erythritol 4-phosphate + NADP(+) = 1-deoxy-D-xylulose 5-phosphate + NADPH + H(+). The protein operates within isoprenoid biosynthesis; isopentenyl diphosphate biosynthesis via DXP pathway; isopentenyl diphosphate from 1-deoxy-D-xylulose 5-phosphate: step 1/6. Its function is as follows. Catalyzes the NADPH-dependent rearrangement and reduction of 1-deoxy-D-xylulose-5-phosphate (DXP) to 2-C-methyl-D-erythritol 4-phosphate (MEP). This chain is 1-deoxy-D-xylulose 5-phosphate reductoisomerase, found in Bradyrhizobium diazoefficiens (strain JCM 10833 / BCRC 13528 / IAM 13628 / NBRC 14792 / USDA 110).